Consider the following 440-residue polypeptide: Xylose isomerase (440 aa).

Active-site residues include His-100 and Asp-103. Residues Glu-231, Glu-267, His-270, Asp-295, Asp-306, Asp-308, and Asp-338 each contribute to the Mg(2+) site.

It belongs to the xylose isomerase family. Homotetramer. Mg(2+) is required as a cofactor.

It is found in the cytoplasm. It carries out the reaction alpha-D-xylose = alpha-D-xylulofuranose. This Paraburkholderia xenovorans (strain LB400) protein is Xylose isomerase.